The primary structure comprises 347 residues: Selenide, water dikinase (347 aa).

C17 is an active-site residue. ATP contacts are provided by residues K20 and 48–50 (TRD). Mg(2+) is bound at residue D51. ATP contacts are provided by residues D68, D91, and 139-141 (GHS). D91 provides a ligand contact to Mg(2+). D227 contacts Mg(2+).

Belongs to the selenophosphate synthase 1 family. Class I subfamily. In terms of assembly, homodimer. The cofactor is Mg(2+).

It carries out the reaction hydrogenselenide + ATP + H2O = selenophosphate + AMP + phosphate + 2 H(+). In terms of biological role, synthesizes selenophosphate from selenide and ATP. This Salmonella typhi protein is Selenide, water dikinase.